An 86-amino-acid polypeptide reads, in one-letter code: Exodeoxyribonuclease 7 small subunit (86 aa).

Belongs to the XseB family. In terms of assembly, heterooligomer composed of large and small subunits.

Its subcellular location is the cytoplasm. The enzyme catalyses Exonucleolytic cleavage in either 5'- to 3'- or 3'- to 5'-direction to yield nucleoside 5'-phosphates.. Its function is as follows. Bidirectionally degrades single-stranded DNA into large acid-insoluble oligonucleotides, which are then degraded further into small acid-soluble oligonucleotides. This is Exodeoxyribonuclease 7 small subunit from Xanthomonas oryzae pv. oryzae (strain MAFF 311018).